A 214-amino-acid chain; its full sequence is Cdc42 effector protein 2 (214 aa).

An N-acetylserine modification is found at S2. The CRIB domain maps to 30–44 (ISPPLGDFRHTIHIG). A phosphoserine mark is found at S31, S101, S137, S141, and S145. Residues 118 to 151 (ALTLPTTQAPPKPPRLHLESPQPSPKSSPQEAGN) are disordered.

The protein belongs to the BORG/CEP family. As to quaternary structure, interacts with CDC42 and RHOQ, in a GTP-dependent manner, and with SEPT7.

The protein resides in the endomembrane system. It localises to the cytoplasm. It is found in the cytoskeleton. Functionally, probably involved in the organization of the actin cytoskeleton. May act downstream of CDC42 to induce actin filament assembly leading to cell shape changes. Induces pseudopodia formation in fibroblasts in a CDC42-dependent manner. The sequence is that of Cdc42 effector protein 2 (Cdc42ep2) from Rattus norvegicus (Rat).